The following is a 75-amino-acid chain: ATP synthase subunit c (75 aa).

2 helical membrane passes run 8-28 and 54-74; these read FLGI…VSNI and AALT…LIFV.

It belongs to the ATPase C chain family. In terms of assembly, F-type ATPases have 2 components, F(1) - the catalytic core - and F(0) - the membrane proton channel. F(1) has five subunits: alpha(3), beta(3), gamma(1), delta(1), epsilon(1). F(0) has three main subunits: a(1), b(2) and c(10-14). The alpha and beta chains form an alternating ring which encloses part of the gamma chain. F(1) is attached to F(0) by a central stalk formed by the gamma and epsilon chains, while a peripheral stalk is formed by the delta and b chains.

The protein resides in the cell inner membrane. Functionally, f(1)F(0) ATP synthase produces ATP from ADP in the presence of a proton or sodium gradient. F-type ATPases consist of two structural domains, F(1) containing the extramembraneous catalytic core and F(0) containing the membrane proton channel, linked together by a central stalk and a peripheral stalk. During catalysis, ATP synthesis in the catalytic domain of F(1) is coupled via a rotary mechanism of the central stalk subunits to proton translocation. Key component of the F(0) channel; it plays a direct role in translocation across the membrane. A homomeric c-ring of between 10-14 subunits forms the central stalk rotor element with the F(1) delta and epsilon subunits. This chain is ATP synthase subunit c, found in Neorickettsia sennetsu (strain ATCC VR-367 / Miyayama) (Ehrlichia sennetsu).